The sequence spans 432 residues: Glutamate-1-semialdehyde 2,1-aminomutase 2 (432 aa).

K268 carries the N6-(pyridoxal phosphate)lysine modification.

Belongs to the class-III pyridoxal-phosphate-dependent aminotransferase family. HemL subfamily. As to quaternary structure, homodimer. It depends on pyridoxal 5'-phosphate as a cofactor.

The protein resides in the cytoplasm. The catalysed reaction is (S)-4-amino-5-oxopentanoate = 5-aminolevulinate. It functions in the pathway porphyrin-containing compound metabolism; protoporphyrin-IX biosynthesis; 5-aminolevulinate from L-glutamyl-tRNA(Glu): step 2/2. In Listeria welshimeri serovar 6b (strain ATCC 35897 / DSM 20650 / CCUG 15529 / CIP 8149 / NCTC 11857 / SLCC 5334 / V8), this protein is Glutamate-1-semialdehyde 2,1-aminomutase 2.